Here is a 393-residue protein sequence, read N- to C-terminus: Formate-dependent phosphoribosylglycinamide formyltransferase (393 aa).

N(1)-(5-phospho-beta-D-ribosyl)glycinamide-binding positions include 22–23 (EL) and Glu82. Residues Arg114, Lys155, 160-165 (SSGKGQ), 195-198 (EGFI), and Glu203 each bind ATP. In terms of domain architecture, ATP-grasp spans 119–308 (RLAAEELGLP…EFALHARAIL (190 aa)). The Mg(2+) site is built by Glu267 and Glu279. N(1)-(5-phospho-beta-D-ribosyl)glycinamide is bound by residues Asp286, Lys356, and 363–364 (RR).

It belongs to the PurK/PurT family. Homodimer.

The catalysed reaction is N(1)-(5-phospho-beta-D-ribosyl)glycinamide + formate + ATP = N(2)-formyl-N(1)-(5-phospho-beta-D-ribosyl)glycinamide + ADP + phosphate + H(+). It participates in purine metabolism; IMP biosynthesis via de novo pathway; N(2)-formyl-N(1)-(5-phospho-D-ribosyl)glycinamide from N(1)-(5-phospho-D-ribosyl)glycinamide (formate route): step 1/1. In terms of biological role, involved in the de novo purine biosynthesis. Catalyzes the transfer of formate to 5-phospho-ribosyl-glycinamide (GAR), producing 5-phospho-ribosyl-N-formylglycinamide (FGAR). Formate is provided by PurU via hydrolysis of 10-formyl-tetrahydrofolate. The protein is Formate-dependent phosphoribosylglycinamide formyltransferase of Stutzerimonas stutzeri (strain A1501) (Pseudomonas stutzeri).